Here is a 248-residue protein sequence, read N- to C-terminus: Probable phosphatase VF_A0065 (248 aa).

His8, His10, His16, His41, Glu74, His102, His132, Asp194, and His196 together coordinate Zn(2+).

The protein belongs to the PHP family. Requires Zn(2+) as cofactor.

This is Probable phosphatase VF_A0065 from Aliivibrio fischeri (strain ATCC 700601 / ES114) (Vibrio fischeri).